The sequence spans 239 residues: Probable transcriptional regulatory protein BCQ_0605 (239 aa).

It belongs to the TACO1 family. YeeN subfamily.

The protein resides in the cytoplasm. This Bacillus cereus (strain Q1) protein is Probable transcriptional regulatory protein BCQ_0605.